Reading from the N-terminus, the 172-residue chain is Peptide deformylase 1 (172 aa).

Positions 91 and 133 each coordinate Fe cation. Glutamate 134 is an active-site residue. Histidine 137 lines the Fe cation pocket.

This sequence belongs to the polypeptide deformylase family. Fe(2+) serves as cofactor.

It carries out the reaction N-terminal N-formyl-L-methionyl-[peptide] + H2O = N-terminal L-methionyl-[peptide] + formate. Its function is as follows. Removes the formyl group from the N-terminal Met of newly synthesized proteins. Requires at least a dipeptide for an efficient rate of reaction. N-terminal L-methionine is a prerequisite for activity but the enzyme has broad specificity at other positions. This Vibrio parahaemolyticus serotype O3:K6 (strain RIMD 2210633) protein is Peptide deformylase 1.